The primary structure comprises 501 residues: ATP synthase subunit beta (501 aa).

153–160 contacts ATP; sequence GGAGVGKT.

It belongs to the ATPase alpha/beta chains family. As to quaternary structure, F-type ATPases have 2 components, CF(1) - the catalytic core - and CF(0) - the membrane proton channel. CF(1) has five subunits: alpha(3), beta(3), gamma(1), delta(1), epsilon(1). CF(0) has three main subunits: a(1), b(2) and c(9-12). The alpha and beta chains form an alternating ring which encloses part of the gamma chain. CF(1) is attached to CF(0) by a central stalk formed by the gamma and epsilon chains, while a peripheral stalk is formed by the delta and b chains.

The protein localises to the cell inner membrane. It carries out the reaction ATP + H2O + 4 H(+)(in) = ADP + phosphate + 5 H(+)(out). Produces ATP from ADP in the presence of a proton gradient across the membrane. The catalytic sites are hosted primarily by the beta subunits. This Cytophaga hutchinsonii (strain ATCC 33406 / DSM 1761 / CIP 103989 / NBRC 15051 / NCIMB 9469 / D465) protein is ATP synthase subunit beta.